We begin with the raw amino-acid sequence, 604 residues long: Glutamine--fructose-6-phosphate aminotransferase [isomerizing] (604 aa).

C2 serves as the catalytic Nucleophile; for GATase activity. The region spanning C2 to Q219 is the Glutamine amidotransferase type-2 domain. 2 SIS domains span residues L279–A427 and L454–P594. K599 acts as the For Fru-6P isomerization activity in catalysis.

Homodimer.

It is found in the cytoplasm. It catalyses the reaction D-fructose 6-phosphate + L-glutamine = D-glucosamine 6-phosphate + L-glutamate. Catalyzes the first step in hexosamine metabolism, converting fructose-6P into glucosamine-6P using glutamine as a nitrogen source. The chain is Glutamine--fructose-6-phosphate aminotransferase [isomerizing] from Legionella pneumophila subsp. pneumophila (strain Philadelphia 1 / ATCC 33152 / DSM 7513).